Here is a 435-residue protein sequence, read N- to C-terminus: Elongation factor 1-alpha (435 aa).

The tr-type G domain occupies 4–229 (KPHLNLIVIG…DQLEIPPKPV (226 aa)). A G1 region spans residues 13 to 20 (GHVDHGKS). Position 13-20 (13-20 (GHVDHGKS)) interacts with GTP. Ser20 contacts Mg(2+). The interval 69 to 73 (GVTIN) is G2. The interval 90 to 93 (DAPG) is G3. Residues 90–94 (DAPGH) and 152–155 (NKMD) contribute to the GTP site. Residues 152 to 155 (NKMD) are G4. Residues 193-195 (VAP) form a G5 region.

This sequence belongs to the TRAFAC class translation factor GTPase superfamily. Classic translation factor GTPase family. EF-Tu/EF-1A subfamily.

Its subcellular location is the cytoplasm. The catalysed reaction is GTP + H2O = GDP + phosphate + H(+). GTP hydrolase that promotes the GTP-dependent binding of aminoacyl-tRNA to the A-site of ribosomes during protein biosynthesis. The chain is Elongation factor 1-alpha from Sulfurisphaera tokodaii (strain DSM 16993 / JCM 10545 / NBRC 100140 / 7) (Sulfolobus tokodaii).